Consider the following 361-residue polypeptide: MSNTIVVVGAGVIGLTSALLLSKNKGNKITVVAKHMPGDYDVEYASPFAGANHSPMATEESSEWERRTWYEFKRLVEEVPEAGVHFQKSRIQRRNVDTEKAQRSGFPDALFSKEPWFKNMFEDFREQHPSEVIPGYDSGCEFTSVCINTAIYLPWLLGQCIKNGVIVKRAILNDISEAKKLSHAGKTPNIIVNATGLGSYKLGGVEDKTMAPARGQIVVVRNESSPMLLTSGVEDGGADVMYLMQRAAGGGTILGGTYDVGNWESQPDPNIANRIMQRIVEVRPEIANGKGVKGLSVIRHAVGMRPWRKDGVRIEEEKLDDETWIVHNYGHSGWGYQGSYGCAENVVQLVDKVGKAAKSKL.

The signal sequence occupies residues 1 to 22 (MSNTIVVVGAGVIGLTSALLLS). Residues A10, I13, K34, H35, A45, S46, G50, and N52 each coordinate FAD. N-linked (GlcNAc...) asparagine glycans are attached at residues N193 and N222. 3 residues coordinate (R)-lactate: Y242, Y258, and R305. Residues Y242, Y258, and R305 each contribute to the anthranilate site. FAD is bound by residues R305, S332, G335, Y336, and Q337. Positions 359–361 (SKL) match the Microbody targeting signal motif.

Belongs to the DAMOX/DASOX family. It depends on FAD as a cofactor. The N-terminus is blocked.

It localises to the peroxisome matrix. The enzyme catalyses a D-alpha-amino acid + O2 + H2O = a 2-oxocarboxylate + H2O2 + NH4(+). Functionally, catalyzes the oxidative deamination of D-amino acids with broad substrate specificity. Enables the organism to utilize D-amino acids as a source of nutrients. This Fusarium vanettenii (Neocosmospora pisi) protein is D-amino-acid oxidase.